A 271-amino-acid polypeptide reads, in one-letter code: Ubiquitin thioesterase OTUB1 (271 aa).

N-acetylalanine is present on alanine 2. At serine 16 the chain carries Phosphoserine. The residue at position 26 (tyrosine 26) is a Phosphotyrosine. In terms of domain architecture, OTU spans 80 to 271 (SYIRKTRPDG…RPGHYDILYK (192 aa)). Aspartate 88 is an active-site residue. Cysteine 91 acts as the Nucleophile in catalysis. Ubiquitin-conjugating enzyme E2 binding stretches follow at residues 130–138 (FTEFTIEDF) and 169–177 (DYLVVYLRL). The interval 189 to 195 (FFEHFIE) is free ubiquitin binding. The ubiquitin-conjugating enzyme E2 binding stretch occupies residues 206–213 (QEVEPMCK). Free ubiquitin binding stretches follow at residues 214-221 (ESDHIHII) and 245-251 (NPHVFPE). Residue histidine 265 is part of the active site.

Belongs to the peptidase C65 family. As to quaternary structure, interacts with RNF128. Forms a ternary complex with RNF128 and USP8. Interacts with FUS and RACK1. Interacts with UBE2D1/UBCH5A, UBE2W/UBC16 and UBE2N/UBC13. In terms of processing, phosphorylation at Tyr-26 by SRC and SRMS promotes deubiquitination of RPTOR via a non-catalytic process.

The protein localises to the cytoplasm. The enzyme catalyses Thiol-dependent hydrolysis of ester, thioester, amide, peptide and isopeptide bonds formed by the C-terminal Gly of ubiquitin (a 76-residue protein attached to proteins as an intracellular targeting signal).. By free ubiquitin: binding of free ubiquitin triggers conformational changes in the OTU domain and formation of a ubiquitin-binding helix in the N-terminus, promoting binding of the conjugated donor ubiquitin in UBE2N/UBC13 to OTUB1. In terms of biological role, hydrolase that can specifically remove compared to 'Lys-48'-linked conjugated ubiquitin from proteins and plays an important regulatory role at the level of protein turnover by preventing degradation. Regulator of T-cell anergy, a phenomenon that occurs when T-cells are rendered unresponsive to antigen rechallenge and no longer respond to their cognate antigen. Acts via its interaction with RNF128/GRAIL. Surprisingly, it regulates RNF128-mediated ubiquitination, but does not deubiquitinate polyubiquitinated RNF128. Deubiquitinates estrogen receptor alpha (ESR1). Mediates deubiquitination of 'Lys-48'-linked polyubiquitin chains, but not 'Lys-63'-linked polyubiquitin chains. Not able to cleave di-ubiquitin. Also capable of removing NEDD8 from NEDD8 conjugates, but with a much lower preference compared to 'Lys-48'-linked ubiquitin. Plays a key non-catalytic role in DNA repair regulation by inhibiting activity of RNF168, an E3 ubiquitin-protein ligase that promotes accumulation of 'Lys-63'-linked histone H2A and H2AX at DNA damage sites. Inhibits RNF168 independently of ubiquitin thioesterase activity by binding and inhibiting UBE2N/UBC13, the E2 partner of RNF168, thereby limiting spreading of 'Lys-63'-linked histone H2A and H2AX marks. Inhibition occurs by binding to free ubiquitin: free ubiquitin acts as an allosteric regulator that increases affinity for UBE2N/UBC13 and disrupts interaction with UBE2V1. The OTUB1-UBE2N/UBC13-free ubiquitin complex adopts a configuration that mimics a cleaved 'Lys48'-linked di-ubiquitin chain. Acts as a regulator of mTORC1 and mTORC2 complexes. When phosphorylated at Tyr-26, acts as an activator of the mTORC1 complex by mediating deubiquitination of RPTOR via a non-catalytic process: acts by binding and inhibiting the activity of the ubiquitin-conjugating enzyme E2 (UBE2D1/UBCH5A, UBE2W/UBC16 and UBE2N/UBC13), thereby preventing ubiquitination of RPTOR. Can also act as an inhibitor of the mTORC1 and mTORC2 complexes in response to amino acids by mediating non-catalytic deubiquitination of DEPTOR. The chain is Ubiquitin thioesterase OTUB1 (Otub1) from Mus musculus (Mouse).